A 121-amino-acid chain; its full sequence is Large ribosomal subunit protein uL24 (121 aa).

Belongs to the universal ribosomal protein uL24 family. As to quaternary structure, part of the 50S ribosomal subunit.

Its function is as follows. One of two assembly initiator proteins, it binds directly to the 5'-end of the 23S rRNA, where it nucleates assembly of the 50S subunit. In terms of biological role, located at the polypeptide exit tunnel on the outside of the subunit. The chain is Large ribosomal subunit protein uL24 from Thermococcus kodakarensis (strain ATCC BAA-918 / JCM 12380 / KOD1) (Pyrococcus kodakaraensis (strain KOD1)).